A 436-amino-acid polypeptide reads, in one-letter code: Deoxyuridine 5'-triphosphate nucleotidohydrolase (436 aa).

Residues 328–330 and 431–432 each bind substrate; these read RSS and FG.

Belongs to the dUTPase family. Mg(2+) serves as cofactor.

The catalysed reaction is dUTP + H2O = dUMP + diphosphate + H(+). In terms of biological role, involved in nucleotide metabolism: produces dUMP, the immediate precursor of thymidine nucleotides and decreases the intracellular concentration of dUTP to avoid uracil incorporation into viral DNA. In Gallid herpesvirus 2 (strain Chicken/Md5/ATCC VR-987) (GaHV-2), this protein is Deoxyuridine 5'-triphosphate nucleotidohydrolase.